Here is an 894-residue protein sequence, read N- to C-terminus: Pentatricopeptide repeat-containing protein At1g19720 (894 aa).

PPR repeat units follow at residues 80-110, 114-144, 145-179, 180-214, 215-245, 246-280, 281-315, 316-350, 351-385, 386-416, 417-451, 452-486, 488-522, 523-557, 558-588, 589-623, 624-659, and 660-694; these read KRST…FGLF, DVFV…MRER, NLFT…GVLP, DDFL…GMSS, CLRV…MRER, DVIA…GISP, GLVT…GITA, DVFT…GVVP, NAVT…GFID, DVLV…VKNK, DVYT…NLRP, NIIT…GKVQ, NTAT…RFMP, NSVT…NLDA, IHAV…METK, DIIT…GITP, NRGT…HIIP, and ALEH…SETP. The type E motif stretch occupies residues 695–770; sequence IWESFLTGCR…PLGQSWIEVR (76 aa). The type E(+) motif stretch occupies residues 771–801; the sequence is NLIHTFTTGDQSKLCTDVLYPLVEKMSRLDN. A type DYW motif region spans residues 803–894; the sequence is SDQYNGELWI…NGDCSCKDYW (92 aa).

It belongs to the PPR family. PCMP-H subfamily.

This chain is Pentatricopeptide repeat-containing protein At1g19720 (DYW7), found in Arabidopsis thaliana (Mouse-ear cress).